Here is a 70-residue protein sequence, read N- to C-terminus: ATP synthase subunit c (70 aa).

2 helical membrane-spanning segments follow: residues 4–24 and 45–65; these read IAAAIAIGLGALGAGIGNGLI and LMFIGVALVEALPIIAVVIAF.

Belongs to the ATPase C chain family. F-type ATPases have 2 components, F(1) - the catalytic core - and F(0) - the membrane proton channel. F(1) has five subunits: alpha(3), beta(3), gamma(1), delta(1), epsilon(1). F(0) has three main subunits: a(1), b(2) and c(10-14). The alpha and beta chains form an alternating ring which encloses part of the gamma chain. F(1) is attached to F(0) by a central stalk formed by the gamma and epsilon chains, while a peripheral stalk is formed by the delta and b chains.

The protein localises to the cell membrane. In terms of biological role, f(1)F(0) ATP synthase produces ATP from ADP in the presence of a proton or sodium gradient. F-type ATPases consist of two structural domains, F(1) containing the extramembraneous catalytic core and F(0) containing the membrane proton channel, linked together by a central stalk and a peripheral stalk. During catalysis, ATP synthesis in the catalytic domain of F(1) is coupled via a rotary mechanism of the central stalk subunits to proton translocation. Its function is as follows. Key component of the F(0) channel; it plays a direct role in translocation across the membrane. A homomeric c-ring of between 10-14 subunits forms the central stalk rotor element with the F(1) delta and epsilon subunits. This Bacillus licheniformis (strain ATCC 14580 / DSM 13 / JCM 2505 / CCUG 7422 / NBRC 12200 / NCIMB 9375 / NCTC 10341 / NRRL NRS-1264 / Gibson 46) protein is ATP synthase subunit c.